Consider the following 390-residue polypeptide: Chorismate synthase (390 aa).

NADP(+) is bound by residues Arg-48 and Arg-54. FMN is bound by residues 125 to 127 (RSS), 238 to 239 (NA), Gly-278, 293 to 297 (KPTSS), and Arg-319. The segment at 359–390 (PRIPGSTTNQIHPVEMQASAPRAEDPEPDESS) is disordered.

This sequence belongs to the chorismate synthase family. Homotetramer. FMNH2 is required as a cofactor.

The catalysed reaction is 5-O-(1-carboxyvinyl)-3-phosphoshikimate = chorismate + phosphate. It functions in the pathway metabolic intermediate biosynthesis; chorismate biosynthesis; chorismate from D-erythrose 4-phosphate and phosphoenolpyruvate: step 7/7. In terms of biological role, catalyzes the anti-1,4-elimination of the C-3 phosphate and the C-6 proR hydrogen from 5-enolpyruvylshikimate-3-phosphate (EPSP) to yield chorismate, which is the branch point compound that serves as the starting substrate for the three terminal pathways of aromatic amino acid biosynthesis. This reaction introduces a second double bond into the aromatic ring system. In Nitrosomonas europaea (strain ATCC 19718 / CIP 103999 / KCTC 2705 / NBRC 14298), this protein is Chorismate synthase.